The primary structure comprises 494 residues: Sugar phosphate exchanger 3 (494 aa).

Residues 10-30 (GALLTSFSHHHLAVFLLTFFS) form a helical membrane-spanning segment. Asparagine 58 carries an N-linked (GlcNAc...) asparagine glycan. The next 5 membrane-spanning stretches (helical) occupy residues 81–101 (TLFL…GLFI), 113–133 (WVLS…GTLT), 146–166 (GLWI…VAVM), 177–197 (VVFG…AFLA), and 209–229 (FLVT…GLLV). Residues 240-261 (GAEESSEEDSQRPLIDGAENED) are disordered. The next 6 membrane-spanning stretches (helical) occupy residues 297–317 (LAYA…PFYL), 333–353 (IWYD…SDVL), 357–377 (APVL…YSRS), 386–406 (LLMT…SSAI), 428–448 (GIVD…VSLI), and 457–477 (VFYF…PLIV).

The protein belongs to the major facilitator superfamily. Organophosphate:Pi antiporter (OPA) (TC 2.A.1.4) family. In terms of assembly, interacts with ATRAID; the interaction is direct and both proteins are mutually dependent for their stability. Post-translationally, glycosylated.

The protein localises to the endoplasmic reticulum membrane. It localises to the lysosome membrane. Unlike the other SLC37 members, lacks glucose-6-phosphate antiporter activity. In osteoclasts, forms a transporter complex with ATRAID for nitrogen-containing-bisphophonates (N-BPs) required for releasing N-BP molecules that have trafficked to lysosomes through fluid-phase endocytosis into the cytosol. The polypeptide is Sugar phosphate exchanger 3 (Slc37a3) (Mus musculus (Mouse)).